The primary structure comprises 191 residues: Adenylate kinase (191 aa).

10–15 (GAGKGT) serves as a coordination point for ATP. The segment at 30–59 (STGDMLRAARTSGTEMGNLVAGVMDRGELV) is NMP. AMP contacts are provided by residues T31, R36, 57-59 (ELV), 83-86 (GFPR), and Q90. An LID region spans residues 124–140 (NRAKEAAAAGQPVRADD). Residue R125 participates in ATP binding. Residues R137 and R148 each contribute to the AMP site. G176 is an ATP binding site.

Belongs to the adenylate kinase family. In terms of assembly, monomer.

The protein resides in the cytoplasm. The enzyme catalyses AMP + ATP = 2 ADP. It participates in purine metabolism; AMP biosynthesis via salvage pathway; AMP from ADP: step 1/1. Catalyzes the reversible transfer of the terminal phosphate group between ATP and AMP. Plays an important role in cellular energy homeostasis and in adenine nucleotide metabolism. The polypeptide is Adenylate kinase (Jannaschia sp. (strain CCS1)).